We begin with the raw amino-acid sequence, 398 residues long: L-methionine gamma-lyase (398 aa).

Pyridoxal 5'-phosphate is bound by residues 59-61 and 89-90; these read YSR and GM. Y114 is a substrate binding site. 208-210 provides a ligand contact to pyridoxal 5'-phosphate; that stretch reads SAT. K211 carries the N6-(pyridoxal phosphate)lysine modification. Residue R375 participates in substrate binding.

Belongs to the trans-sulfuration enzymes family. L-methionine gamma-lyase subfamily. Homotetramer; dimer of active dimers. It depends on pyridoxal 5'-phosphate as a cofactor.

It carries out the reaction L-methionine + H2O = methanethiol + 2-oxobutanoate + NH4(+). It catalyses the reaction L-homocysteine + H2O = 2-oxobutanoate + hydrogen sulfide + NH4(+) + H(+). Irreversibly inactivated by DL-propargylglycine. Its function is as follows. Catalyzes the alpha,gamma-elimination of L-methionine to produce methanethiol, 2-oxobutanoate and ammonia. Is involved in L-methionine catabolism. In fact, shows a multicatalytic function since it also catalyzes gamma-replacement of L-methionine with thiol compounds, alpha,gamma-elimination and gamma-replacement reactions of L-homocysteine and its S-substituted derivatives, O-substituted-L-homoserines and DL-selenomethionine, and, to a lesser extent, alpha,beta-elimination and beta-replacement reactions of L-cysteine, S-methyl-L-cysteine, and O-acetyl-L-serine. Also catalyzes deamination and gamma-addition reactions of L-vinylglycine. Thus, the enzyme is able to cleave C-S, C-Se, and C-O bonds of sulfur, selenium, and oxygen amino acids, respectively. The chain is L-methionine gamma-lyase from Pseudomonas putida (Arthrobacter siderocapsulatus).